Here is a 70-residue protein sequence, read N- to C-terminus: Small ribosomal subunit protein bS21 (70 aa).

It belongs to the bacterial ribosomal protein bS21 family.

This is Small ribosomal subunit protein bS21 from Campylobacter curvus (strain 525.92).